The following is a 242-amino-acid chain: High mobility group protein homolog (242 aa).

2 consecutive DNA-binding regions (HMG box) follow at residues 54-122 (PKRN…EANK) and 126-197 (KPVK…IDKE).

It is found in the host nucleus. The sequence is that of High mobility group protein homolog (EF1) from Acheta domesticus (House cricket).